Reading from the N-terminus, the 152-residue chain is Transcriptional repressor NrdR (152 aa).

A zinc finger lies at C3–C34. Positions L49–R139 constitute an ATP-cone domain.

This sequence belongs to the NrdR family. Zn(2+) serves as cofactor.

Functionally, negatively regulates transcription of bacterial ribonucleotide reductase nrd genes and operons by binding to NrdR-boxes. This chain is Transcriptional repressor NrdR, found in Heliobacterium modesticaldum (strain ATCC 51547 / Ice1).